The primary structure comprises 718 residues: MCASVKYNIRGPALIPRMKTKHRIYYITLFSIVLLGLIATGMFQFWPHSIESSGDWSVEKRTGRDVPLVRLPADSPVPERGDLSCRMHTCFDVYRCGFNPKNKIKVYIYPLKKYVGEAGVPVSSTISREYNELLTAISDSDYYTDDVTRACLFVPSIDLLNQNSLRVKETAQALAQLSRWDRGTNHLLFNMLPGGPPDYNTALDVPRDRALLAGGGFSTWTYRQGYDVSIPVYSPLSAEVDLPEKGPGPRRYFLLSSQVALHPEYREDLAALQARHGEAVLVLDKCSNLSEGVPAARRRCHQQQAFDYPQVLQEATFCMVLRGARLGQAVLSDVLRAGCVPVIIADSYVLPFSEVLDWKRASVVVPEEKMSDVYSILQSIPRRQIEEMQRQARWFWEAYFQSIKAIALATLQIINDRIYPYAAISYEDWNDPPAVKWGSVSNPLFLPLIPPQSQGFTAIVLTYDRVESLFRVITEVSKVPSLSKLLVVWNNQNKNPPEDSLWPKIRVPLKVVRTAENKLSNRFFPYDEIETEAVLAIDDDIIMLTSDELQFGYEVWREFPDRLVGYPGRLHLWDHEMNKWKYESEWTNEVSMVLTGAAFYHKYFNYLYTYKMPGDIKNWVDAHMNCEDIAMNFLVANVTGKAVIKVTPRKKFKCPECTAIDGLSLDQTHMVERSECINKFASVFGTMPLKVVEHRADPVLYKDDFPEKLKSFPNIGSL.

The Cytoplasmic portion of the chain corresponds to 1–25 (MCASVKYNIRGPALIPRMKTKHRIY). A helical; Signal-anchor for type II membrane protein transmembrane segment spans residues 26–46 (YITLFSIVLLGLIATGMFQFW). The Lumenal segment spans residues 47–718 (PHSIESSGDW…LKSFPNIGSL (672 aa)). 4 disulfide bridges follow: Cys85–Cys90, Cys96–Cys151, Cys286–Cys300, and Cys318–Cys339. A glycan (N-linked (GlcNAc...) asparagine) is linked at Asn288. UDP contacts are provided by Leu461, Arg465, Asn490, and Asn517. Arg465, Asn490, Asn517, Arg522, Asp538, Asp539, and Asp540 together coordinate UDP-N-acetyl-alpha-D-glucosamine. Positions 538 and 539 each coordinate UDP. Mn(2+) is bound at residue Asp540. Positions 582 and 584 each coordinate a protein. A disulfide bridge links Cys626 with Cys676. Positions 627 and 628 each coordinate UDP-N-acetyl-alpha-D-glucosamine. The N-linked (GlcNAc...) asparagine glycan is linked to Asn637. Residues Lys651 and Lys653 each coordinate a protein. Arg673 is a UDP-N-acetyl-alpha-D-glucosamine binding site.

Belongs to the glycosyltransferase 47 family. Part of the heparan sulfate polymerase, a dimeric complex composed of EXT1 and EXT2. Could also form homooligomeric complexes. Interacts with NDST1. Interacts with GALNT5. Mn(2+) serves as cofactor. A soluble form is generated by proteolytic processing. In terms of processing, N-glycosylated at Asn-637.

The protein localises to the golgi apparatus membrane. The protein resides in the golgi apparatus. It is found in the cis-Golgi network membrane. It localises to the endoplasmic reticulum membrane. Its subcellular location is the secreted. It catalyses the reaction 3-O-{[(1-&gt;4)-beta-D-GlcA-(1-&gt;4)-alpha-D-GlcNAc](n)-(1-&gt;4)-beta-D-GlcA-(1-&gt;3)-beta-D-Gal-(1-&gt;3)-beta-D-Gal-(1-&gt;4)-beta-D-Xyl}-L-seryl-[protein] + UDP-N-acetyl-alpha-D-glucosamine = 3-O-{alpha-D-GlcNAc-[(1-&gt;4)-beta-D-GlcA-(1-&gt;4)-alpha-D-GlcNAc](n)-(1-&gt;4)-beta-D-GlcA-(1-&gt;3)-beta-D-Gal-(1-&gt;3)-beta-D-Gal-(1-&gt;4)-beta-D-Xyl}-L-seryl-[protein] + UDP + H(+). It participates in protein modification; protein glycosylation. Its function is as follows. Glycosyltransferase forming with EXT1 the heterodimeric heparan sulfate polymerase which catalyzes the elongation of the heparan sulfate glycan backbone. Glycan backbone extension consists in the alternating transfer of (1-&gt;4)-beta-D-GlcA and (1-&gt;4)-alpha-D-GlcNAc residues from their respective UDP-sugar donors. Both EXT1 and EXT2 are required for the full activity of the polymerase since EXT1 bears the N-acetylglucosaminyl-proteoglycan 4-beta-glucuronosyltransferase activity within the complex while EXT2 carries the glucuronosyl-N-acetylglucosaminyl-proteoglycan 4-alpha-N-acetylglucosaminyltransferase activity. Heparan sulfate proteoglycans are ubiquitous components of the extracellular matrix and play an important role in tissue homeostasis and signaling. The protein is Exostosin-2 of Bos taurus (Bovine).